The following is a 166-amino-acid chain: Regulator of ribonuclease activity A (166 aa).

This sequence belongs to the RraA family. In terms of assembly, homotrimer. Binds to both RNA-binding sites in the C-terminal region of Rne and to RhlB.

It localises to the cytoplasm. Its function is as follows. Globally modulates RNA abundance by binding to RNase E (Rne) and regulating its endonucleolytic activity. Can modulate Rne action in a substrate-dependent manner by altering the composition of the degradosome. Modulates RNA-binding and helicase activities of the degradosome. This chain is Regulator of ribonuclease activity A, found in Pasteurella multocida (strain Pm70).